The chain runs to 236 residues: Phosphoribosylaminoimidazole-succinocarboxamide synthase (236 aa).

It belongs to the SAICAR synthetase family.

The catalysed reaction is 5-amino-1-(5-phospho-D-ribosyl)imidazole-4-carboxylate + L-aspartate + ATP = (2S)-2-[5-amino-1-(5-phospho-beta-D-ribosyl)imidazole-4-carboxamido]succinate + ADP + phosphate + 2 H(+). Its pathway is purine metabolism; IMP biosynthesis via de novo pathway; 5-amino-1-(5-phospho-D-ribosyl)imidazole-4-carboxamide from 5-amino-1-(5-phospho-D-ribosyl)imidazole-4-carboxylate: step 1/2. The polypeptide is Phosphoribosylaminoimidazole-succinocarboxamide synthase (Rickettsia akari (strain Hartford)).